Reading from the N-terminus, the 543-residue chain is Chaperonin GroEL (543 aa).

Residues 29 to 32, 86 to 90, Gly-413, 476 to 478, and Asp-492 contribute to the ATP site; these read TLGP, DGTTT, and NAA.

Belongs to the chaperonin (HSP60) family. In terms of assembly, forms a cylinder of 14 subunits composed of two heptameric rings stacked back-to-back. Interacts with the co-chaperonin GroES.

The protein localises to the cytoplasm. The enzyme catalyses ATP + H2O + a folded polypeptide = ADP + phosphate + an unfolded polypeptide.. In terms of biological role, together with its co-chaperonin GroES, plays an essential role in assisting protein folding. The GroEL-GroES system forms a nano-cage that allows encapsulation of the non-native substrate proteins and provides a physical environment optimized to promote and accelerate protein folding. The sequence is that of Chaperonin GroEL from Streptococcus pyogenes serotype M3 (strain SSI-1).